We begin with the raw amino-acid sequence, 1170 residues long: Glucose transport transcription regulator RGT1 (1170 aa).

Residues 1–22 (MNELNTVSTNSSDSTKNGGTSN) show a composition bias toward polar residues. The disordered stretch occupies residues 1–46 (MNELNTVSTNSSDSTKNGGTSNSPDDMDSAAAASHAIKKRTKASRA). The segment at residues 47-76 (CDQCRKKKIKCDYKDEKGVCSNCQRNGDRC) is a DNA-binding region (zn(2)-C6 fungal-type). Residues 77–148 (SFDRVPLKRG…VPSTPSRSNS (72 aa)) form a disordered region. Residues 99–108 (RTNEIQDHNN) are compositionally biased toward basic and acidic residues. Over residues 113-138 (NTFDNSNNTLNNNTGNSGDNGINSNT) the composition is skewed to low complexity. Residues 139–148 (VPSTPSRSNS) are compositionally biased toward polar residues. 4 positions are modified to phosphoserine: Ser202, Ser205, Ser208, and Ser229. The segment covering 217–234 (PNEQLSYNTVQQSPITNK) has biased composition (polar residues). Disordered stretches follow at residues 217 to 254 (PNEQLSYNTVQQSPITNKHTNDSGNANGSVTGSGSASG), 269 to 288 (APTDDHNGEQTRRSSSIPSL), 293 to 343 (SNSL…PSIS), 384 to 506 (AQQT…HPMT), 725 to 757 (DEEANTGNGNTKTSEFEIGSESAGHMNPSNSPN), and 946 to 974 (RPPNPPANNPTVQEGPSAMGSSPVAGNLN). Residues 239–250 (SGNANGSVTGSG) are compositionally biased toward low complexity. Residues 271–280 (TDDHNGEQTR) are compositionally biased toward basic and acidic residues. Phosphoserine is present on residues Ser283 and Ser284. Composition is skewed to low complexity over residues 293–302 (SNSLLLGGQP), 309–341 (QQSQPQAHQQKLQQGQNPYSYSQFSQQQPYNPS), and 385–397 (QQTQRPQGQQVPQ). 2 positions are modified to phosphoserine: Ser410 and Ser414. Over residues 411-422 (APVSVTLSTDRL) the composition is skewed to polar residues. A compositionally biased stretch (low complexity) spans 424-444 (GNENNNGEINNNNGSNNSGSS). Over residues 445-457 (KDTSQHSQESVTT) the composition is skewed to polar residues. The span at 473–488 (STKKRRKSYVSKKTKP) shows a compositional bias: basic residues. Polar residues predominate over residues 493 to 506 (SISITSKDSAHPMT). Ser1130 bears the Phosphoserine mark.

The protein belongs to the EDS1/RGT1 family. Glucose-induced phosphorylation regulates the DNA-binding activity. Hyperphosphorylation in cells growing on high levels of glucose does prevents DNA-binding and dephosphorylation restores DNA-binding ability.

It is found in the nucleus. The protein resides in the cytoplasm. Functionally, glucose-responsive transcription factor that regulates expression of several glucose transporter (HXT) genes in response to glucose. In the absence of glucose, it functions as a transcriptional repressor, whereas high concentrations of glucose cause it to function as a transcriptional activator. In cells growing on low levels of glucose, has a neutral role, neither repressing nor activating transcription. Binds the consensus binding site sequence 5'-CGGANNA-3', of which multiple copies are present in all HXT promoters regulated by RGT1. The polypeptide is Glucose transport transcription regulator RGT1 (RGT1) (Saccharomyces cerevisiae (strain YJM789) (Baker's yeast)).